The chain runs to 241 residues: Large ribosomal subunit protein uL3 (241 aa).

At Gln157 the chain carries N5-methylglutamine.

The protein belongs to the universal ribosomal protein uL3 family. In terms of assembly, part of the 50S ribosomal subunit. Forms a cluster with proteins L14 and L19. Methylated by PrmB.

In terms of biological role, one of the primary rRNA binding proteins, it binds directly near the 3'-end of the 23S rRNA, where it nucleates assembly of the 50S subunit. This is Large ribosomal subunit protein uL3 from Vesicomyosocius okutanii subsp. Calyptogena okutanii (strain HA).